The following is a 236-amino-acid chain: Phosphoribosylaminoimidazole-succinocarboxamide synthase (236 aa).

The protein belongs to the SAICAR synthetase family.

It carries out the reaction 5-amino-1-(5-phospho-D-ribosyl)imidazole-4-carboxylate + L-aspartate + ATP = (2S)-2-[5-amino-1-(5-phospho-beta-D-ribosyl)imidazole-4-carboxamido]succinate + ADP + phosphate + 2 H(+). It participates in purine metabolism; IMP biosynthesis via de novo pathway; 5-amino-1-(5-phospho-D-ribosyl)imidazole-4-carboxamide from 5-amino-1-(5-phospho-D-ribosyl)imidazole-4-carboxylate: step 1/2. This is Phosphoribosylaminoimidazole-succinocarboxamide synthase from Akkermansia muciniphila (strain ATCC BAA-835 / DSM 22959 / JCM 33894 / BCRC 81048 / CCUG 64013 / CIP 107961 / Muc).